The following is a 321-amino-acid chain: MSAGISHVPAAQVSQHVTVLLEEAVEALSIKPDGVYVDGTFGRGGHSRKILEKLGAQGRLVALDRDLAAIQAAQGIQDARFKIVHSHFAAMAQVLASLNIQQVDGVLLDLGISSPQIDEGERGFSFRFDGPLDMRMDQSRGQTAAEFIATATEQELTRVIKEYGEERFAKQIARAIVAQRAGGMDISTTGQLAKIVAGAVPKVEPGQDPATRTFQALRIFINQELEELSLTLPQCLSLLAPQGRLAVISFHSLEDRIVKRFIRGEQDRDNLPAHFPVRASDLPQPRLVAIGRAVRPSEDEVRRNPRSRSAVLRVAERTAVL.

S-adenosyl-L-methionine is bound by residues 44-46, Asp64, Phe88, Asp109, and Gln116; that span reads GGH.

The protein belongs to the methyltransferase superfamily. RsmH family.

The protein resides in the cytoplasm. It carries out the reaction cytidine(1402) in 16S rRNA + S-adenosyl-L-methionine = N(4)-methylcytidine(1402) in 16S rRNA + S-adenosyl-L-homocysteine + H(+). Specifically methylates the N4 position of cytidine in position 1402 (C1402) of 16S rRNA. The protein is Ribosomal RNA small subunit methyltransferase H of Methylobacillus flagellatus (strain ATCC 51484 / DSM 6875 / VKM B-1610 / KT).